A 391-amino-acid chain; its full sequence is Casein kinase II subunit alpha (391 aa).

The segment at Gln-36 to Leu-41 is interaction with beta subunit. The Protein kinase domain occupies Tyr-39–Phe-324. Residues Leu-45–Val-53 and Lys-68 contribute to the ATP site. Asp-156 serves as the catalytic Proton acceptor. Phosphothreonine; by CDK1 is present on residues Thr-344 and Thr-360. A phosphoserine; by CDK1 mark is found at Ser-362 and Ser-370.

This sequence belongs to the protein kinase superfamily. Ser/Thr protein kinase family. CK2 subfamily. As to quaternary structure, heterotetramer composed of two catalytic subunits (alpha chain and/or alpha' chain) and two regulatory subunits (beta chains). The tetramer can exist as a combination of 2 alpha/2 beta, 2 alpha'/2 beta or 1 alpha/1 alpha'/2 beta subunits. Also part of a CK2-SPT16-SSRP1 complex composed of SSRP1, SUPT16H, CSNK2A1, CSNK2A2 and CSNK2B, which forms following UV irradiation. Interacts with RNPS1. Interacts with SNAI1. Interacts with PML. Interacts with CCAR2. Interacts with HIRIP3. Post-translationally, phosphorylated at Thr-344, Thr-360, Ser-362 and Ser-370 by CDK1 in prophase and metaphase and dephosphorylated during anaphase. Phosphorylation does not directly affect casein kinase 2 activity, but may contribute to its regulation by forming binding sites for interacting proteins and/or targeting it to different compartments.

It is found in the nucleus. The catalysed reaction is L-seryl-[protein] + ATP = O-phospho-L-seryl-[protein] + ADP + H(+). The enzyme catalyses L-threonyl-[protein] + ATP = O-phospho-L-threonyl-[protein] + ADP + H(+). With respect to regulation, constitutively active protein kinase whose activity is not directly affected by phosphorylation. Seems to be regulated by level of expression and localization. Catalytic subunit of a constitutively active serine/threonine-protein kinase complex that phosphorylates a large number of substrates containing acidic residues C-terminal to the phosphorylated serine or threonine. Regulates numerous cellular processes, such as cell cycle progression, apoptosis and transcription, as well as viral infection. May act as a regulatory node which integrates and coordinates numerous signals leading to an appropriate cellular response. During mitosis, functions as a component of the p53/TP53-dependent spindle assembly checkpoint (SAC) that maintains cyclin-B-CDK1 activity and G2 arrest in response to spindle damage. Also required for p53/TP53-mediated apoptosis, phosphorylating 'Ser-392' of p53/TP53 following UV irradiation. Phosphorylates a number of DNA repair proteins in response to DNA damage, such as MDC1, MRE11, RAD9A, RAD51 and HTATSF1, promoting their recruitment to DNA damage sites. Can also negatively regulate apoptosis. Phosphorylates the caspases CASP9 and CASP2 and the apoptotic regulator NOL3. Phosphorylation protects CASP9 from cleavage and activation by CASP8, and inhibits the dimerization of CASP2 and activation of CASP8. Phosphorylates YY1, protecting YY1 from cleavage by CASP7 during apoptosis. Regulates transcription by direct phosphorylation of RNA polymerases I, II, III and IV. Also phosphorylates and regulates numerous transcription factors including NF-kappa-B, STAT1, CREB1, IRF1, IRF2, ATF1, ATF4, SRF, MAX, JUN, FOS, MYC and MYB. Phosphorylates Hsp90 and its co-chaperones FKBP4 and CDC37, which is essential for chaperone function. Mediates sequential phosphorylation of FNIP1, promoting its gradual interaction with Hsp90, leading to activate both kinase and non-kinase client proteins of Hsp90. Regulates Wnt signaling by phosphorylating CTNNB1 and the transcription factor LEF1. Acts as an ectokinase that phosphorylates several extracellular proteins. Plays an important role in the circadian clock function by phosphorylating BMAL1 at 'Ser-90' which is pivotal for its interaction with CLOCK and which controls CLOCK nuclear entry. Phosphorylates FMR1, promoting FMR1-dependent formation of a membraneless compartment. May phosphorylate histone H2A on 'Ser-1'. In Bos taurus (Bovine), this protein is Casein kinase II subunit alpha (CSNK2A1).